The primary structure comprises 107 residues: Early E3A 12.5 kDa protein (107 aa).

This sequence belongs to the adenoviridae E3A-2 family.

Its function is as follows. Not yet known. This chain is Early E3A 12.5 kDa protein, found in Human adenovirus C serotype 5 (HAdV-5).